A 352-amino-acid chain; its full sequence is 4-hydroxy-3-methylbut-2-en-1-yl diphosphate synthase (flavodoxin) (352 aa).

4 residues coordinate [4Fe-4S] cluster: cysteine 262, cysteine 265, cysteine 297, and glutamate 304.

Belongs to the IspG family. Requires [4Fe-4S] cluster as cofactor.

It carries out the reaction (2E)-4-hydroxy-3-methylbut-2-enyl diphosphate + oxidized [flavodoxin] + H2O + 2 H(+) = 2-C-methyl-D-erythritol 2,4-cyclic diphosphate + reduced [flavodoxin]. It participates in isoprenoid biosynthesis; isopentenyl diphosphate biosynthesis via DXP pathway; isopentenyl diphosphate from 1-deoxy-D-xylulose 5-phosphate: step 5/6. Its function is as follows. Converts 2C-methyl-D-erythritol 2,4-cyclodiphosphate (ME-2,4cPP) into 1-hydroxy-2-methyl-2-(E)-butenyl 4-diphosphate. This is 4-hydroxy-3-methylbut-2-en-1-yl diphosphate synthase (flavodoxin) from Campylobacter concisus (strain 13826).